The primary structure comprises 640 residues: Calpain-5 (640 aa).

The Calpain catalytic domain maps to 26-343 (LFEDPLFPAT…FTDIIKCRLI (318 aa)). Residues cysteine 81, histidine 252, and asparagine 284 contribute to the active site. Positions 344 to 496 (NTSYLSIHKT…VFTDVPSNCR (153 aa)) are domain III. Residues 499–617 (RLDEPPRTCW…HTLHLQDRSS (119 aa)) form the C2 domain.

This sequence belongs to the peptidase C2 family.

Calcium-regulated non-lysosomal thiol-protease. The protein is Calpain-5 (Capn5) of Mus musculus (Mouse).